A 352-amino-acid polypeptide reads, in one-letter code: Alanine racemase (352 aa).

Residue K33 is the Proton acceptor; specific for D-alanine of the active site. K33 carries the post-translational modification N6-(pyridoxal phosphate)lysine. R129 is a substrate binding site. The active-site Proton acceptor; specific for L-alanine is Y250. M298 is a substrate binding site.

Belongs to the alanine racemase family. Requires pyridoxal 5'-phosphate as cofactor.

It carries out the reaction L-alanine = D-alanine. It participates in amino-acid biosynthesis; D-alanine biosynthesis; D-alanine from L-alanine: step 1/1. In terms of biological role, catalyzes the interconversion of L-alanine and D-alanine. May also act on other amino acids. This chain is Alanine racemase (alr), found in Neisseria meningitidis serogroup A / serotype 4A (strain DSM 15465 / Z2491).